Here is a 215-residue protein sequence, read N- to C-terminus: Interleukin-12 subunit alpha (215 aa).

Positions M1 to A22 are cleaved as a signal peptide. 3 disulfides stabilise this stretch: C33–C106, C60–C192, and C81–C119. An N-linked (GlcNAc...) asparagine glycan is attached at N89.

Belongs to the IL-6 superfamily. In terms of assembly, heterodimer with IL12B; disulfide-linked. This heterodimer is known as interleukin IL-12. Heterodimer with EBI3/IL27B; not disulfide-linked. This heterodimer is known as interleukin IL-35. Interacts with NBR1; this interaction promotes IL-12 secretion.

The protein resides in the secreted. Its function is as follows. Heterodimerizes with IL12B to form the IL-12 cytokine or with EBI3/IL27B to form the IL-35 cytokine. IL-12 is primarily produced by professional antigen-presenting cells (APCs) such as B-cells and dendritic cells (DCs) as well as macrophages and granulocytes and regulates T-cell and natural killer-cell responses, induces the production of interferon-gamma (IFN-gamma), favors the differentiation of T-helper 1 (Th1) cells and is an important link between innate resistance and adaptive immunity. Mechanistically, exerts its biological effects through a receptor composed of IL12R1 and IL12R2 subunits. Binding to the receptor results in the rapid tyrosine phosphorylation of a number of cellular substrates including the JAK family kinases TYK2 and JAK2. In turn, recruited STAT4 gets phosphorylated and translocates to the nucleus where it regulates cytokine/growth factor responsive genes. As part of IL-35, plays essential roles in maintaining the immune homeostasis of the liver microenvironment and also functions as an immune-suppressive cytokine. Mediates biological events through unconventional receptors composed of IL12RB2 and gp130/IL6ST heterodimers or homodimers. Signaling requires the transcription factors STAT1 and STAT4, which form a unique heterodimer that binds to distinct DNA sites. This chain is Interleukin-12 subunit alpha (IL12A), found in Sigmodon hispidus (Hispid cotton rat).